Consider the following 307-residue polypeptide: Homoserine O-acetyltransferase (307 aa).

Catalysis depends on Cys-142, which acts as the Acyl-thioester intermediate. Residues Lys-163 and Ser-192 each coordinate substrate. The active-site Proton acceptor is the His-235. Glu-237 is a catalytic residue. Arg-249 contacts substrate.

Belongs to the MetA family.

It localises to the cytoplasm. The catalysed reaction is L-homoserine + acetyl-CoA = O-acetyl-L-homoserine + CoA. Its pathway is amino-acid biosynthesis; L-methionine biosynthesis via de novo pathway; O-acetyl-L-homoserine from L-homoserine: step 1/1. Transfers an acetyl group from acetyl-CoA to L-homoserine, forming acetyl-L-homoserine. This Desulfitobacterium hafniense (strain Y51) protein is Homoserine O-acetyltransferase.